We begin with the raw amino-acid sequence, 1322 residues long: Phosphoribosylformylglycinamidine synthase (1322 aa).

Residues 300-311 (GASTGAGGEIRD) and alanine 702 each bind ATP. Mg(2+) contacts are provided by aspartate 703, glutamate 742, asparagine 746, and aspartate 915. Serine 917 lines the ATP pocket. Residues 1073–1322 (VAILREQGIN…LFRNARAWVG (250 aa)) form the Glutamine amidotransferase type-1 domain. The active-site Nucleophile is the cysteine 1166. Residues histidine 1287 and glutamate 1289 contribute to the active site.

It in the N-terminal section; belongs to the FGAMS family. Monomer.

The protein localises to the cytoplasm. The catalysed reaction is N(2)-formyl-N(1)-(5-phospho-beta-D-ribosyl)glycinamide + L-glutamine + ATP + H2O = 2-formamido-N(1)-(5-O-phospho-beta-D-ribosyl)acetamidine + L-glutamate + ADP + phosphate + H(+). It functions in the pathway purine metabolism; IMP biosynthesis via de novo pathway; 5-amino-1-(5-phospho-D-ribosyl)imidazole from N(2)-formyl-N(1)-(5-phospho-D-ribosyl)glycinamide: step 1/2. Its function is as follows. Phosphoribosylformylglycinamidine synthase involved in the purines biosynthetic pathway. Catalyzes the ATP-dependent conversion of formylglycinamide ribonucleotide (FGAR) and glutamine to yield formylglycinamidine ribonucleotide (FGAM) and glutamate. This is Phosphoribosylformylglycinamidine synthase from Xylella fastidiosa (strain Temecula1 / ATCC 700964).